The following is a 421-amino-acid chain: MGSRETPSSCSKTLETLDLETSDSSSPDADSPLEEQWLKSSPALKEDSVDVVLEDCKEPLSPSSPPTGREMIRYEVKVNRRSIEDICLCCGTLQVYTRHPLFEGGLCAPCKDKFLESLFLYDDDGHQSYCTICCSGGTLFICESPDCTRCYCFECVDILVGPGTSERINAMACWVCFLCLPFSRSGLLQRRKRWRHQLKAFHDQEGAGPMEIYKTVSAWKRQPVRVLSLFRNIDKVLKSLGFLESGSGSGGGTLKYVEDVTNVVRRDVEKWGPFDLVYGSTQPLGSSCDRCPGWYMFQFHRILQYALPRQESQRPFFWIFMDNLLLTEDDQETTTRFLQTEAVTLQDVRGRDYQNAMRVWSNIPGLKSKHAPLTPKEEEYLQAQVRSRSKLDAPKVDLLVKNCLLPLREYFKYFSQNSLPL.

Residues 1-14 (MGSRETPSSCSKTL) show a composition bias toward polar residues. The interval 1-39 (MGSRETPSSCSKTLETLDLETSDSSSPDADSPLEEQWLK) is disordered. One can recognise an ADD domain in the interval 75–207 (EVKVNRRSIE…LKAFHDQEGA (133 aa)). A GATA-type; atypical zinc finger spans residues 86–116 (ICLCCGTLQVYTRHPLFEGGLCAPCKDKFLE). The PHD-type; atypical zinc finger occupies 127–183 (QSYCTICCSGGTLFICESPDCTRCYCFECVDILVGPGTSERINAMACWVCFLCLPFS).

In terms of assembly, homodimer. Heterotetramer composed of 1 DNMT3A homodimer and 2 DNMT3L subunits (DNMT3L-DNMT3A-DNMT3A-DNMT3L). Interacts with histone H3 (via N-terminus); interaction is strongly inhibited by methylation at lysine 4 (H3K4me). Interacts with EZH2; the interaction is direct. Interacts with SPOCD1. In terms of tissue distribution, expressed in testis, thymus, ovary, and heart.

The protein resides in the nucleus. Catalytically inactive regulatory factor of DNA methyltransferases that can either promote or inhibit DNA methylation depending on the context. Essential for the function of DNMT3A and DNMT3B: activates DNMT3A and DNMT3B by binding to their catalytic domain. Acts by accelerating the binding of DNA and S-adenosyl-L-methionine (AdoMet) to the methyltransferases and dissociates from the complex after DNA binding to the methyltransferases. Recognizes unmethylated histone H3 lysine 4 (H3K4me0) and induces de novo DNA methylation by recruitment or activation of DNMT3. Plays a key role in embryonic stem cells and germ cells. In germ cells, required for the methylation of imprinted loci together with DNMT3A. In male germ cells, specifically required to methylate retrotransposons, preventing their mobilization. Plays a key role in embryonic stem cells (ESCs) by acting both as an positive and negative regulator of DNA methylation. While it promotes DNA methylation of housekeeping genes together with DNMT3A and DNMT3B, it also acts as an inhibitor of DNA methylation at the promoter of bivalent genes. Interacts with the EZH2 component of the PRC2/EED-EZH2 complex, preventing interaction of DNMT3A and DNMT3B with the PRC2/EED-EZH2 complex, leading to maintain low methylation levels at the promoters of bivalent genes. Promotes differentiation of ESCs into primordial germ cells by inhibiting DNA methylation at the promoter of RHOX5, thereby activating its expression. The sequence is that of DNA (cytosine-5)-methyltransferase 3-like (Dnmt3l) from Mus musculus (Mouse).